An 87-amino-acid chain; its full sequence is Stannin (87 aa).

The Mitochondrial intermembrane segment spans residues 1 to 10; that stretch reads MSIMDHSPTT. The helical transmembrane segment at 11–31 threads the bilayer; sequence GVVTVIVILIAIAALGALILG. At 32-87 the chain is on the cytoplasmic side; it reads CWCYLRLQRISQSEDEESIVGDGETKEPFLLVQYSAKGPCVERKAKLTPNGPEVHS. Residue Ser-49 is modified to Phosphoserine.

This sequence belongs to the stannin family. As to quaternary structure, monomer.

Its subcellular location is the mitochondrion outer membrane. In terms of biological role, plays a role in the toxic effects of organotins. Plays a role in endosomal maturation. The polypeptide is Stannin (SNN) (Bos taurus (Bovine)).